The primary structure comprises 201 residues: NAD(P)H dehydrogenase (quinone) (201 aa).

One can recognise a Flavodoxin-like domain in the interval 7–192; sequence ILVLYYSMYG…SIARYQGEYV (186 aa). Residues 13–18 and 81–83 contribute to the FMN site; these read SMYGHI and TRF. An NAD(+)-binding site is contributed by Tyr-15. Trp-101 is a binding site for substrate. FMN-binding positions include 116-121 and His-136; that span reads STGTGG.

This sequence belongs to the WrbA family. FMN serves as cofactor.

It carries out the reaction a quinone + NADH + H(+) = a quinol + NAD(+). The enzyme catalyses a quinone + NADPH + H(+) = a quinol + NADP(+). This Shigella sonnei (strain Ss046) protein is NAD(P)H dehydrogenase (quinone).